The sequence spans 400 residues: Probable glycosyltransferase WbjE (400 aa).

The protein belongs to the glycosyltransferase group 1 family. Glycosyltransferase 4 subfamily.

The protein operates within bacterial outer membrane biogenesis; LPS O-antigen biosynthesis. In Pseudomonas aeruginosa, this protein is Probable glycosyltransferase WbjE (wbjE).